Here is a 641-residue protein sequence, read N- to C-terminus: Epithelial sodium channel subunit beta (641 aa).

The Cytoplasmic portion of the chain corresponds to 1-50 (MHLKKYLLKGLHRLQKGPGYSYKELLVWYCNNTNTHGPKRIICEGPKKKA). Residues 51–71 (MWFLITLLFTSLVCWQWGVFI) form a helical membrane-spanning segment. Residues 72 to 533 (RTYLSWEVSV…GGQFGFWMGG (462 aa)) are Extracellular-facing. 9 cysteine pairs are disulfide-bonded: Cys98–Cys273, Cys185–Cys190, Cys197–Cys204, Cys250–Cys257, Cys362–Cys449, Cys387–Cys445, Cys391–Cys441, Cys400–Cys427, and Cys402–Cys416. The N-linked (GlcNAc...) asparagine glycan is linked to Asn141. An N-linked (GlcNAc...) asparagine glycan is attached at Asn261. The helical transmembrane segment at 534–554 (SVLCLIEFGEILIDFVWITII) threads the bilayer. The Cytoplasmic portion of the chain corresponds to 555–641 (KLVAFAKSLR…IESDSEGDAI (87 aa)). The interval 593–624 (PDVARPGPDPGTYPDEQTLPIPGTPPPNYDSL) is disordered. The PY motif; recruits WW domain-containing proteins and is thereby required for ubiquitination and inhibition of the channel by NEDD4 and NEDD4L motif lies at 617-621 (PPPNY). Phosphoserine occurs at positions 634 and 636.

The protein belongs to the amiloride-sensitive sodium channel (TC 1.A.6) family. SCNN1B subfamily. Component of the heterotrimeric epithelial sodium channel (ENaC) composed of an alpha/SCNN1A, a beta/SCNN1B and a gamma/SCNN1G subunit. An additional delta/SCNN1D subunit can replace the alpha/SCNN1A subunit to form an alternative channel with specific properties. Interacts with WWP1 (via WW domains). Interacts with WWP2 (via WW domains); inhibits the channel. Interacts with the full-length immature form of PCSK9 (pro-PCSK9). Interacts (N-glycosylated) with BPIFA1; the interaction is direct and inhibits the proteolytic processing of SCNN1A and SCNN1G and the activation of ENaC. Post-translationally, ubiquitinated. Can be ubiquitinated at multiple sites and undergo monoubiquitination and polyubiquitination. Ubiquitination by NEDD4 or NEDD4L inhibits the ENaC channel through endocytosis, intracellular retention and degradation of its individual subunits. However, some studies could not confirm the ubiquitination of this subunit of the ENaC. In terms of processing, phosphorylated on serine and threonine residues. Aldosterone and insulin increase the basal level of phosphorylation. N-glycosylated. N-glycosylation is required for interaction with BPIFA1.

It localises to the apical cell membrane. It is found in the cytoplasmic vesicle membrane. It carries out the reaction Na(+)(in) = Na(+)(out). Its activity is regulated as follows. Originally identified and characterized by its inhibition by the diuretic drug amiloride. In terms of biological role, this is one of the three pore-forming subunits of the heterotrimeric epithelial sodium channel (ENaC), a critical regulator of sodium balance and fluid homeostasis. ENaC operates in epithelial tissues, where it mediates the electrodiffusion of sodium ions from extracellular fluid through the apical membrane of cells, with water following osmotically. It plays a key role in maintaining sodium homeostasis through electrogenic sodium reabsorption in the kidneys. Additionally, ENaC is essential for airway surface liquid homeostasis, which is crucial for proper mucus clearance. This is Epithelial sodium channel subunit beta from Canis lupus familiaris (Dog).